The following is a 677-amino-acid chain: Protein hook (677 aa).

The region spanning 6–123 (NEMYYSLLEW…RLLQLVLGCA (118 aa)) is the Calponin-homology (CH) domain. 2 coiled-coil regions span residues 135 to 436 (EIMC…KCGH) and 478 to 588 (QTAL…AKEV).

It belongs to the hook family. As to quaternary structure, homodimer. Interacts with microtubules via its N-terminus.

It is found in the cytoplasm. It localises to the cytoskeleton. Its subcellular location is the endosome. The protein resides in the synapse. Its function is as follows. Involved in endocytic trafficking by stabilizing organelles of the endocytic pathway. Probably acts as a cytoskeletal linker protein required to tether endosome vesicles to the cytoskeleton. Involved in modulation of endocytosis at stages required for down-regulation of membrane proteins that control synapse size. Not involved in synaptic vesicle recycling. Required in R7 cells for boss endocytosis into multivesicular bodies (MVBs). Has a role in regulating adult longevity. The polypeptide is Protein hook (Drosophila persimilis (Fruit fly)).